We begin with the raw amino-acid sequence, 726 residues long: WD repeat and coiled-coil-containing protein (726 aa).

WD repeat units follow at residues 55–98 (GQFE…SDKN) and 154–194 (KSSG…LNAC). The tract at residues 502 to 574 (RSYDGDQSPT…PNFIQPSDVS (73 aa)) is disordered. The span at 506–515 (GDQSPTSSAN) shows a compositional bias: polar residues. Over residues 517 to 533 (FDEKRNRLRMESFDTEP) the composition is skewed to basic and acidic residues. Over residues 550 to 574 (SGSTSPKSECQNSSPPNFIQPSDVS) the composition is skewed to polar residues. The stretch at 581-609 (SISRNVERLCCNFAHLQQHLSELTDITRN) forms a coiled coil.

This is WD repeat and coiled-coil-containing protein (wdcp) from Xenopus laevis (African clawed frog).